The following is a 270-amino-acid chain: MAENKRVISIENRIPELKKYRKKKLVRHLAILIGIFVILIAITLYFLSPLSKLDKIAVSGNKQLTENEVRKESGLEIGEFVIGISNGKTEDALKKNTLIKDATVSKEGLNDVQINITEFKTIGYQQQDGKYYDVLESGIMLTDQPRQFPIGNDLLFQNFKNGKTLEKMVDQINKLPKDVVSSISEVIYSPTKSDKNHIKLYMNDGNQVSADISTFAEKMQHYPAIVAQLAKGQKGVIDIEVGSYFQSYYQQNAEKKATEEAAKEKKETNE.

The Cytoplasmic portion of the chain corresponds to 1 to 28 (MAENKRVISIENRIPELKKYRKKKLVRH). A helical transmembrane segment spans residues 29 to 49 (LAILIGIFVILIAITLYFLSP). Over 50–270 (LSKLDKIAVS…AAKEKKETNE (221 aa)) the chain is Extracellular. The 69-residue stretch at 51–119 (SKLDKIAVSG…NDVQINITEF (69 aa)) folds into the POTRA domain.

It belongs to the FtsQ/DivIB family. DivIB subfamily.

It is found in the cell membrane. Cell division protein that may be involved in stabilizing or promoting the assembly of the division complex. The protein is Cell division protein DivIB of Listeria monocytogenes serovar 1/2a (strain ATCC BAA-679 / EGD-e).